The chain runs to 85 residues: Putative membrane protein insertion efficiency factor (85 aa).

Belongs to the UPF0161 family.

It localises to the cell membrane. In terms of biological role, could be involved in insertion of integral membrane proteins into the membrane. This is Putative membrane protein insertion efficiency factor from Buchnera aphidicola subsp. Schizaphis graminum (strain Sg).